The chain runs to 607 residues: Phosphomethylpyrimidine synthase (607 aa).

Residues asparagine 216, methionine 245, tyrosine 274, histidine 310, 330–332 (SRG), 371–374 (DGLR), and glutamate 410 contribute to the substrate site. A Zn(2+)-binding site is contributed by histidine 414. Tyrosine 437 provides a ligand contact to substrate. Residue histidine 478 participates in Zn(2+) binding. [4Fe-4S] cluster is bound by residues cysteine 558, cysteine 561, and cysteine 566.

Belongs to the ThiC family. In terms of assembly, homodimer. It depends on [4Fe-4S] cluster as a cofactor.

The catalysed reaction is 5-amino-1-(5-phospho-beta-D-ribosyl)imidazole + S-adenosyl-L-methionine = 4-amino-2-methyl-5-(phosphooxymethyl)pyrimidine + CO + 5'-deoxyadenosine + formate + L-methionine + 3 H(+). It participates in cofactor biosynthesis; thiamine diphosphate biosynthesis. In terms of biological role, catalyzes the synthesis of the hydroxymethylpyrimidine phosphate (HMP-P) moiety of thiamine from aminoimidazole ribotide (AIR) in a radical S-adenosyl-L-methionine (SAM)-dependent reaction. The protein is Phosphomethylpyrimidine synthase of Agrobacterium fabrum (strain C58 / ATCC 33970) (Agrobacterium tumefaciens (strain C58)).